The primary structure comprises 122 residues: uncharacterized protein (122 aa).

A coiled-coil region spans residues 79-114 (VIEDVASAIKEMMESAAKDLDKIEEVIKESLEKYLR).

This is an uncharacterized protein from Archaeoglobus fulgidus (strain ATCC 49558 / DSM 4304 / JCM 9628 / NBRC 100126 / VC-16).